The primary structure comprises 422 residues: BTB/POZ domain-containing protein KCTD18 (422 aa).

Residues 12–80 enclose the BTB domain; the sequence is DILRLNVGGC…YLHGEVHIPT (69 aa). 2 disordered regions span residues 289 to 357 and 376 to 422; these read VKNS…THLP and LRRT…DQTK. Pro residues predominate over residues 396–406; it reads PAGPPEPPPDA. Positions 413–422 are enriched in polar residues; sequence WTENGQDQTK.

This is BTB/POZ domain-containing protein KCTD18 (KCTD18) from Bos taurus (Bovine).